A 1021-amino-acid chain; its full sequence is Ubiquitin-activating enzyme E1 1 (1021 aa).

ATP is bound by residues arginine 22, alanine 442, and aspartate 468. Residue aspartate 470 participates in Mg(2+) binding. Residues arginine 479, lysine 492, valine 518, and 542-543 (DN) each bind ATP. Aspartate 542 is a Mg(2+) binding site. Cysteine 598 serves as the catalytic Glycyl thioester intermediate.

It belongs to the ubiquitin-activating E1 family. Monomer.

Its subcellular location is the cytoplasm. The protein localises to the nucleus. It catalyses the reaction ATP + ubiquitin + [E1 ubiquitin-activating enzyme]-L-cysteine = AMP + diphosphate + S-ubiquitinyl-[E1 ubiquitin-activating enzyme]-L-cysteine.. It participates in protein modification; protein ubiquitination. Functionally, E1 ubiquitin-activating enzyme that catalyzes the first step in ubiquitin conjugation to mark cellular proteins for degradation through the ubiquitin-proteasome system. Activates ubiquitin by first adenylating its C-terminal glycine residue with ATP, and thereafter linking this residue to the side chain of a cysteine residue in E1, yielding a ubiquitin-E1 thioester and free AMP. The sequence is that of Ubiquitin-activating enzyme E1 1 (UBA1) from Candida albicans (strain WO-1) (Yeast).